The chain runs to 82 residues: Sulfur carrier protein TusA (82 aa).

Residue cysteine 19 is the Cysteine persulfide intermediate of the active site.

This sequence belongs to the sulfur carrier protein TusA family.

It localises to the cytoplasm. Functionally, sulfur carrier protein which probably makes part of a sulfur-relay system. The chain is Sulfur carrier protein TusA from Vibrio cholerae serotype O1 (strain ATCC 39541 / Classical Ogawa 395 / O395).